A 572-amino-acid chain; its full sequence is MSKIAFRMENICKSFDNGRVKANVDVNLTVYENTVHTLLGENGAGKSTLTSILFGLYQPDSGKIFIGEEEVHFKSSKDAVQHKIGMVHQHFKLVDNYTVLDNIILGNESSFSIPFTNGKLKLPLLHRKASEAKIQAMMERYDLHVNLHQKVSRLTVGQQQRVEILKVLFRDSDILIFDEPTAVLSDQEIKSFLNIIKNFKKMGKTIVLISHKLNEIKEVAETATILRQGHSVGTFQIKDTSIDEMARLMMGKELKETKNNTQFTAKGEPVLKVENLHLYLNQNWFYKLIARWNQKRINQLQKQGKPAKTLWLKSWLEGLAAIEKTPRFIRGIVNNLGFGSQQVFDKGISFEIHKGEIFAIAGVEGNGQNQLIDLICGLEKAAPKKVFFNGFDISRYSIRKRINAGIGFVLEDRHKYGLILDQTVRFNAVNNQIDRKQFSSWNFLNQMQIAVYTNQIVDKFDVRGAVQGTAIVRLLSGGNQQKLIIGRELTKQNELLVFAQVTRGLDVGAISFIHQKILDAKKQNNAILLVSYELDEILAIADTIGVINKGNLLEVNKRDVMTRERIGKLIMQ.

ABC transporter domains follow at residues 6 to 253 and 327 to 572; these read FRME…MGKE and RFIR…LIMQ. 40-47 serves as a coordination point for ATP; it reads GENGAGKS.

This sequence belongs to the ABC transporter superfamily.

It is found in the cell membrane. In terms of biological role, part of the ABC transporter complex involved in carbohydrates import. Probably responsible for energy coupling to the transport system. The sequence is that of Putative carbohydrate transport ATP-binding protein MPN_258 from Mycoplasma pneumoniae (strain ATCC 29342 / M129 / Subtype 1) (Mycoplasmoides pneumoniae).